Consider the following 287-residue polypeptide: Eukaryotic translation initiation factor 3 subunit F (287 aa).

In terms of domain architecture, MPN spans 12–142 (VRVHPVVLFQ…IKAYVCVSLG (131 aa)).

This sequence belongs to the eIF-3 subunit F family. In terms of assembly, component of the eukaryotic translation initiation factor 3 (eIF-3) complex.

Its subcellular location is the cytoplasm. Functionally, component of the eukaryotic translation initiation factor 3 (eIF-3) complex, which is involved in protein synthesis of a specialized repertoire of mRNAs and, together with other initiation factors, stimulates binding of mRNA and methionyl-tRNAi to the 40S ribosome. The eIF-3 complex specifically targets and initiates translation of a subset of mRNAs involved in cell proliferation. The polypeptide is Eukaryotic translation initiation factor 3 subunit F (Culex quinquefasciatus (Southern house mosquito)).